Reading from the N-terminus, the 473-residue chain is Digalactosyldiacylglycerol synthase 2, chloroplastic (473 aa).

Interaction with the membrane lipid bilayer regions lie at residues L130–G148 and Q227–Y245.

Belongs to the glycosyltransferase group 1 family. Glycosyltransferase 4 subfamily. As to expression, expressed in leaves, flowers and roots, but not in stems and siliques.

Its subcellular location is the plastid. It localises to the chloroplast outer membrane. The enzyme catalyses a 1,2-diacyl-3-O-(beta-D-galactosyl)-sn-glycerol + UDP-alpha-D-galactose = a 1,2-diacyl-3-O-[alpha-D-galactosyl-(1-&gt;6)-beta-D-galactosyl]-sn-glycerol + UDP + H(+). Its activity is regulated as follows. Stimulated by anionic phospholipids. Its function is as follows. Involved in the synthesis of diacylglycerol galactolipids that are specifically found in thylakoid membranes. Specific for alpha-glycosidic linkages. During phosphate shortage, involved in the biosynthesis of digalactosyldiacylglycerol (DGDG) which rescues the limitation of phospholipids. This is Digalactosyldiacylglycerol synthase 2, chloroplastic from Arabidopsis thaliana (Mouse-ear cress).